The primary structure comprises 431 residues: Islet cell autoantigen 1-like protein (431 aa).

Residues 44-247 (ASDAELDAKL…TAQMMTQIQE (204 aa)) form the AH domain. 2 disordered regions span residues 295–316 (EEEE…PRDS) and 351–372 (CGSP…SLTS). Residues 301–316 (RFEREPAVARALPRDS) show a composition bias toward basic and acidic residues. The span at 356–372 (TGLTSQEPSVGPGSLTS) shows a compositional bias: polar residues.

The chain is Islet cell autoantigen 1-like protein (Ica1l) from Mus musculus (Mouse).